Here is a 613-residue protein sequence, read N- to C-terminus: Oxidoreductase GME11365 (613 aa).

Plastocyanin-like domains lie at 72–188 (ISEA…HGPS), 198–331 (PLLI…WIHG), and 431–571 (VDWR…EQPS).

The protein belongs to the multicopper oxidase family.

It functions in the pathway secondary metabolite biosynthesis. Oxidoreductase; part of the gene cluster that mediates the biosynthesis of dibenzodioxocinones such as pestalotiollide B, a novel class of inhibitors against cholesterol ester transfer protein (CEPT). The biosynthesis initiates from condensation of acetate and malonate units catalyzed by the non-reducing PKS pks8/GME11356. Pks8/GME11356 lacks a thioesterase (TE) domain, which is important to the cyclizing of the third ring of atrochrysone carboxylic acid, and the esterase GME11355 might play the role of TE and catalyzes the cyclization reaction of the C ring. The lactamase-like protein GME11357 (or other beta-lactamases in Pestalotiopsis microspora) probably hydrolyzes the thioester bond between the ACP of pks8/GME11356 and the intermediate to release atrochrysone carboxylic acid, which is spontaneously dehydrates to form endocrocin anthrone. Endocrocin anthrone is further converted to emodin via the endocrocin intermediate. Emodin is then oxidized by several enzymes such as the Baeyer-Villiger oxidase GME11358, the oxidoreductase GME11367, the short chain dehydrogenase/reductase GME11373, as well as by other oxidoreductases from the cluster, to modify the A and C rings and open the B ring, and finally yield monodictyphenone. The prenyltransferase GME11375 may catalyze the addition reaction between the C5 side chains and the carbon bone of dibenzodioxocinones. The remaining biochemical reactions to the final product dibenzodioxocinones should be methylation catalyzed by methyltransferase GME11366 and reduction and lactonization reaction catalyzed by a series of oxidordeuctases. This Pestalotiopsis microspora protein is Oxidoreductase GME11365.